The chain runs to 160 residues: Large ribosomal subunit protein uL22c (160 aa).

The protein belongs to the universal ribosomal protein uL22 family. As to quaternary structure, part of the 50S ribosomal subunit.

It localises to the plastid. Its subcellular location is the chloroplast. Functionally, this protein binds specifically to 23S rRNA. The globular domain of the protein is located near the polypeptide exit tunnel on the outside of the subunit, while an extended beta-hairpin is found that lines the wall of the exit tunnel in the center of the 70S ribosome. This chain is Large ribosomal subunit protein uL22c (rpl22), found in Olimarabidopsis pumila (Dwarf rocket).